Here is a 171-residue protein sequence, read N- to C-terminus: Co-chaperone protein HscB (171 aa).

The J domain occupies 2 to 74 (DYFTLFGLPA…LTRAEYLLSL (73 aa)).

The protein belongs to the HscB family. Interacts with HscA and stimulates its ATPase activity. Interacts with IscU.

Functionally, co-chaperone involved in the maturation of iron-sulfur cluster-containing proteins. Seems to help targeting proteins to be folded toward HscA. The protein is Co-chaperone protein HscB of Salmonella typhimurium (strain LT2 / SGSC1412 / ATCC 700720).